We begin with the raw amino-acid sequence, 141 residues long: Protein wingless (141 aa).

The O-palmitoleoyl serine; by PORCN moiety is linked to residue Ser3. Over residues Thr40–Asn49 the composition is skewed to polar residues. The disordered stretch occupies residues Thr40–Arg61. Cysteines 107 and 122 form a disulfide. Asn108 and Asn138 each carry an N-linked (GlcNAc...) asparagine glycan.

It belongs to the Wnt family. In terms of processing, palmitoleoylated by porcupine. The lipid group functions as a sorting signal, targeting the ligand to polarized vesicles that transport wg to unique sites at the cell surface. Depalmitoleoylated by notum, leading to inhibit Wnt signaling pathway.

The protein localises to the secreted. The protein resides in the extracellular space. Its subcellular location is the extracellular matrix. Functionally, segment polarity protein. Binds to the frizzled seven-transmembrane receptors. This protein is probably a growth factor. The chain is Protein wingless (WG) from Manduca sexta (Tobacco hawkmoth).